A 422-amino-acid polypeptide reads, in one-letter code: Adenylosuccinate synthetase (422 aa).

GTP-binding positions include 11-17 (GDEGKGK) and 39-41 (GHT). Aspartate 12 functions as the Proton acceptor in the catalytic mechanism. Aspartate 12 and glycine 39 together coordinate Mg(2+). Residues 12-15 (DEGK), 37-40 (NAGH), threonine 129, arginine 143, asparagine 219, threonine 234, and arginine 298 each bind IMP. Residue histidine 40 is the Proton donor of the active site. 294 to 300 (VTTGRRR) is a binding site for substrate. GTP-binding positions include arginine 300, 326–328 (KLD), and 409–411 (GTG).

This sequence belongs to the adenylosuccinate synthetase family. As to quaternary structure, homodimer. The cofactor is Mg(2+).

It localises to the cytoplasm. It catalyses the reaction IMP + L-aspartate + GTP = N(6)-(1,2-dicarboxyethyl)-AMP + GDP + phosphate + 2 H(+). Its pathway is purine metabolism; AMP biosynthesis via de novo pathway; AMP from IMP: step 1/2. Its function is as follows. Plays an important role in the de novo pathway and in the salvage pathway of purine nucleotide biosynthesis. Catalyzes the first committed step in the biosynthesis of AMP from IMP. This is Adenylosuccinate synthetase from Ajellomyces capsulatus (strain NAm1 / WU24) (Darling's disease fungus).